Reading from the N-terminus, the 507-residue chain is Probable D-lactate dehydrogenase, mitochondrial (507 aa).

A mitochondrion-targeting transit peptide spans 1 to 52 (MARLLRSATWELFPWRGYCSQKAKGELCRDFVEALKAVVGGSHVSTAAVVRE). K36 is modified (N6-acetyllysine). An FAD-binding PCMH-type domain is found at 62 to 265 (RCEPPDAVVW…TATTLRLHPA (204 aa)). K315 is subject to N6-acetyllysine. K358 carries the N6-acetyllysine; alternate modification. K358 is modified (N6-succinyllysine; alternate). N6-acetyllysine occurs at positions 445 and 472.

The protein belongs to the FAD-binding oxidoreductase/transferase type 4 family. Interacts with CSRP3. It depends on FAD as a cofactor. As to expression, expressed moderately in heart and liver and at lower levels in skeletal muscle and kidney.

The protein resides in the mitochondrion. It carries out the reaction (R)-lactate + 2 Fe(III)-[cytochrome c] = 2 Fe(II)-[cytochrome c] + pyruvate + 2 H(+). Its function is as follows. Involved in D-lactate, but not L-lactate catabolic process. The protein is Probable D-lactate dehydrogenase, mitochondrial of Homo sapiens (Human).